Here is a 330-residue protein sequence, read N- to C-terminus: Virulence plasmid integrase pGP8-D (330 aa).

In terms of domain architecture, Core-binding (CB) spans 39–124 (FSLFEVIMHW…SYISLTRFLN (86 aa)). A Tyr recombinase domain is found at 152–327 (VKTDAMNSLQ…SREDNASKKM (176 aa)). Catalysis depends on residues R189, K214, H279, R282, and H305. Y314 (O-(3'-phospho-DNA)-tyrosine intermediate) is an active-site residue.

The protein belongs to the 'phage' integrase family.

This chain is Virulence plasmid integrase pGP8-D, found in Chlamydia trachomatis serovar L2 (strain ATCC VR-902B / DSM 19102 / 434/Bu).